We begin with the raw amino-acid sequence, 416 residues long: Protein-lysine N-trimethyltransferase SMYD5 (416 aa).

In terms of domain architecture, SET spans 21-351; sequence GSVEVRYVDS…PGEEICISYL (331 aa). An MYND-type zinc finger spans residues 98–136; the sequence is PELCSVRKDLHQNCPHCQVMYCSAECRLAAAEQYHQILC. S-adenosyl-L-methionine is bound at residue tyrosine 350. The disordered stretch occupies residues 383–416; the sequence is EADDPNVTSEEEEEEDEEEGEPEDAELGDEMTDV.

The protein belongs to the class V-like SAM-binding methyltransferase superfamily. In terms of assembly, interacts with the N-CoR complex. Interacts with EHMT2 and CBX5. In terms of processing, ubiquitinated and degradaed by the proteasome in response to mild hypothermia (32 degrees Celsius), relieving repression of the SP1 gene.

It localises to the cytoplasm. The catalysed reaction is L-lysyl-[protein] + 3 S-adenosyl-L-methionine = N(6),N(6),N(6)-trimethyl-L-lysyl-[protein] + 3 S-adenosyl-L-homocysteine + 3 H(+). It carries out the reaction L-lysyl(20)-[histone H4] + 3 S-adenosyl-L-methionine = N(6),N(6),N(6)-trimethyl-L-lysyl(20)-[histone H4] + 3 S-adenosyl-L-homocysteine + 3 H(+). It catalyses the reaction L-lysyl(36)-[histone H3] + 3 S-adenosyl-L-methionine = N(6),N(6),N(6)-trimethyl-L-lysyl(36)-[histone H3] + 3 S-adenosyl-L-homocysteine + 3 H(+). Its function is as follows. Protein-lysine N-trimethyltransferase that specifically catalyzes trimethylation of 'Lys-22' of the RPL40/eL40 subunit of the 60S ribosome, thereby promoting translation elongation and protein synthesis. May also act as a histone methyltransferase in the context of histone octamers, but not on nucleosome substrates: trimethylates 'Lys-36' of histone H3 and 'Lys-20' of histone H4 to form H3K36me3 and H4K20me3, respectively. The histone methyltransferase activity, which is independent of its SET domain, is however unsure in vivo. In association with the NCoR corepressor complex, involved in the repression of toll-like receptor 4 (TLR4)-target inflammatory genes in macrophages, possibly by catalyzing the formation of H4K20me3 at the gene promoters. Plays an important role in embryonic stem (ES) cell self-renewal and differentiation. Maintains genome stability of ES cells during differentiation through regulation of heterochromatin formation and repression of endogenous repetitive DNA elements by promoting H4K20me3 marks. Acts as a regulator of the hypothermia response: its degradation in response to mild hypothermia relieves the formation of H3K36me3 at gene promoters, allowing expression of the neuroprotective gene SP1. This chain is Protein-lysine N-trimethyltransferase SMYD5, found in Mus musculus (Mouse).